We begin with the raw amino-acid sequence, 396 residues long: Chalcone synthase B (396 aa).

Cys-170 is an active-site residue.

The protein belongs to the thiolase-like superfamily. Chalcone/stilbene synthases family.

The enzyme catalyses (E)-4-coumaroyl-CoA + 3 malonyl-CoA + 3 H(+) = 2',4,4',6'-tetrahydroxychalcone + 3 CO2 + 4 CoA. Its pathway is secondary metabolite biosynthesis; flavonoid biosynthesis. In terms of biological role, the primary product of this enzyme is 4,2',4',6'-tetrahydroxychalcone (also termed naringenin-chalcone or chalcone) which can under specific conditions spontaneously isomerize into naringenin. In Ipomoea purpurea (Common morning glory), this protein is Chalcone synthase B (CHSB).